Reading from the N-terminus, the 442-residue chain is Xaa-Pro dipeptidase (442 aa).

The Mn(2+) site is built by D245, D256, H338, E383, and E422.

It belongs to the peptidase M24B family. Bacterial-type prolidase subfamily. Mn(2+) is required as a cofactor.

The enzyme catalyses Xaa-L-Pro dipeptide + H2O = an L-alpha-amino acid + L-proline. In terms of biological role, splits dipeptides with a prolyl residue in the C-terminal position. This is Xaa-Pro dipeptidase from Sodalis glossinidius (strain morsitans).